The sequence spans 456 residues: Exodeoxyribonuclease 7 large subunit (456 aa).

It belongs to the XseA family. As to quaternary structure, heterooligomer composed of large and small subunits.

The protein localises to the cytoplasm. It carries out the reaction Exonucleolytic cleavage in either 5'- to 3'- or 3'- to 5'-direction to yield nucleoside 5'-phosphates.. In terms of biological role, bidirectionally degrades single-stranded DNA into large acid-insoluble oligonucleotides, which are then degraded further into small acid-soluble oligonucleotides. In Escherichia coli (strain ATCC 8739 / DSM 1576 / NBRC 3972 / NCIMB 8545 / WDCM 00012 / Crooks), this protein is Exodeoxyribonuclease 7 large subunit.